The primary structure comprises 51 residues: Lantibiotic lacticin-481 (51 aa).

The propeptide occupies 1 to 24 (MKEQNSFNLLQEVTESELDLILGA). The segment at residues 33–38 (TISHEC) is a cross-link (beta-methyllanthionine (Thr-Cys)). Cross-links (lanthionine (Ser-Cys)) lie at residues 35–49 (SHEC…VFTC) and 42–50 (SWQFVFTCC). Residue threonine 48 is modified to (Z)-2,3-didehydrobutyrine.

The protein belongs to the type A lantibiotic family. In terms of assembly, monomer or homodimer. Post-translationally, maturation of lantibiotics involves the enzymatic conversion of Thr, and Ser into dehydrated AA and the formation of thioether bonds with cysteine. This is followed by membrane translocation and cleavage of the modified precursor. In terms of processing, it is established that the 2,3-didehydrobutyrine is the Z-isomer.

Functionally, lanthionine-containing peptide antibiotic (lantibiotic) active on Gram-positive bacteria. The bactericidal activity of lantibiotics is based on depolarization of energized bacterial cytoplasmic membranes, initiated by the formation of aqueous transmembrane pores. Lacticin 481 is a broad spectrum bacteriocin exhibiting activity against a wide range of lactic acid bacteria and C.tyrobutyricum. In Lactococcus lactis subsp. lactis (Streptococcus lactis), this protein is Lantibiotic lacticin-481 (lctA).